We begin with the raw amino-acid sequence, 264 residues long: Tropomyosin Cha f 1.0101 (264 aa).

The residue at position 1 (Met-1) is an N-acetylmethionine. Disordered stretches follow at residues 1–56 (MDAI…VENE) and 92–126 (IQLPEEDLERSEERLNTATTKLAEASQAADESERM). The stretch at 1–264 (MDAIKKKMQA…RLEDELVNEK (264 aa)) forms a coiled coil. Over residues 12-45 (KLEKDNAMDRADTLEQQNKEANLRAEKTEEEIRA) the composition is skewed to basic and acidic residues.

The protein belongs to the tropomyosin family. As to quaternary structure, homodimer. Expressed in muscle (at protein level). Expressed in claw muscles.

Tropomyosin, in association with the troponin complex, plays a central role in the calcium dependent regulation of muscle contraction. In Charybdis feriata (Crucifix crab), this protein is Tropomyosin Cha f 1.0101.